The following is a 263-amino-acid chain: Renal glandular kallikrein (263 aa).

Positions 1–18 (MWFLILFLALFLGGIDAA) are cleaved as a signal peptide. Positions 19-24 (PPVQSR) are cleaved as a propeptide — activation peptide. Residues 25 to 260 (IIGGFNCEKN…YRSWIKDVMA (236 aa)) enclose the Peptidase S1 domain. Intrachain disulfides connect Cys-31–Cys-175, Cys-50–Cys-66, Cys-153–Cys-221, Cys-186–Cys-200, and Cys-211–Cys-236. Catalysis depends on His-65, which acts as the Charge relay system. N-linked (GlcNAc...) asparagine glycosylation is present at Asn-102. The active-site Charge relay system is the Asp-121. The Charge relay system role is filled by Ser-215.

Belongs to the peptidase S1 family. Kallikrein subfamily.

It carries out the reaction Preferential cleavage of Arg-|-Xaa bonds in small molecule substrates. Highly selective action to release kallidin (lysyl-bradykinin) from kininogen involves hydrolysis of Met-|-Xaa or Leu-|-Xaa.. Glandular kallikreins cleave Met-Lys and Arg-Ser bonds in kininogen to release Lys-bradykinin. The sequence is that of Renal glandular kallikrein from Mastomys natalensis (African soft-furred rat).